A 437-amino-acid chain; its full sequence is MHIVVVGLNYRTAPVEVRERFSFAEKDMPQALQELLRTKSVLEGVIIATCNRTEIYVVVDRLHMCGYFIRSFMERWFGVPREEFTRHLYMYEDEQAVRHLFRVACGLDSMVLGETQILGQVKSAFLLSQRQKGTGTWFNMLFKQAVTLGKRAHSETAIGQSAVSISYAAVELGKRIFGSFSGKRVLILGAGKMSELTAKHLSGGGADEVIVANRTYARAQELAAKFDGTPCTMQEAMERLADVDILISSTGAEGIRDHVGQVERSMKRRPDRPLFMIDIAVPRDIEPEIGVLENVFLYDIDDLEGIVENNLEMRRAEAVKIDKMIEEEMQVFANWLQTLGVKPVIRALQEKAAHIHESTLDSMFNKLPELDERQRKVIRRLTKSILNQMMHDPINRIKEMAGGKQGAEALEMFTQIFALEKHLEAGAPVGRGKRRLP.

Residues 49 to 52, S109, 114 to 116, and Q120 each bind substrate; these read TCNR and ETQ. C50 functions as the Nucleophile in the catalytic mechanism. NADP(+) is bound at residue 189-194; it reads GAGKMS.

The protein belongs to the glutamyl-tRNA reductase family. In terms of assembly, homodimer.

The enzyme catalyses (S)-4-amino-5-oxopentanoate + tRNA(Glu) + NADP(+) = L-glutamyl-tRNA(Glu) + NADPH + H(+). It functions in the pathway porphyrin-containing compound metabolism; protoporphyrin-IX biosynthesis; 5-aminolevulinate from L-glutamyl-tRNA(Glu): step 1/2. Functionally, catalyzes the NADPH-dependent reduction of glutamyl-tRNA(Glu) to glutamate 1-semialdehyde (GSA). The polypeptide is Glutamyl-tRNA reductase (Paenibacillus macerans (Bacillus macerans)).